Consider the following 220-residue polypeptide: Adenylate kinase (220 aa).

An ATP-binding site is contributed by 12–17 (GAGKGT). Residues 32–62 (STGDIFRDIVKKENDELGKKIKEIMERGELV) form an NMP region. AMP is bound by residues threonine 33, arginine 38, 60–62 (ELV), 88–91 (GYPR), and glutamine 95. An LID region spans residues 129–166 (ARRICPKCGRIYNLISLPPKEDELCDDCKVKLVQREDD). Arginine 130 is a binding site for ATP. Zn(2+) contacts are provided by cysteine 133 and cysteine 136. 139–140 (IY) is a binding site for ATP. The Zn(2+) site is built by cysteine 153 and cysteine 156. Residues arginine 163 and arginine 174 each coordinate AMP. Position 202 (isoleucine 202) interacts with ATP.

The protein belongs to the adenylate kinase family. In terms of assembly, monomer.

It is found in the cytoplasm. The enzyme catalyses AMP + ATP = 2 ADP. It participates in purine metabolism; AMP biosynthesis via salvage pathway; AMP from ADP: step 1/1. In terms of biological role, catalyzes the reversible transfer of the terminal phosphate group between ATP and AMP. Plays an important role in cellular energy homeostasis and in adenine nucleotide metabolism. In Thermotoga petrophila (strain ATCC BAA-488 / DSM 13995 / JCM 10881 / RKU-1), this protein is Adenylate kinase.